A 257-amino-acid polypeptide reads, in one-letter code: Glutamate racemase (257 aa).

Substrate contacts are provided by residues 12–13 (DS) and 44–45 (YG). The active-site Proton donor/acceptor is Cys75. Substrate is bound at residue 76-77 (NT). The active-site Proton donor/acceptor is Cys186. 187-188 (TH) serves as a coordination point for substrate.

The protein belongs to the aspartate/glutamate racemases family.

The enzyme catalyses L-glutamate = D-glutamate. It participates in cell wall biogenesis; peptidoglycan biosynthesis. Its function is as follows. Provides the (R)-glutamate required for cell wall biosynthesis. The protein is Glutamate racemase of Clostridium kluyveri (strain NBRC 12016).